The primary structure comprises 135 residues: Small ribosomal subunit protein eS6 (135 aa).

It belongs to the eukaryotic ribosomal protein eS6 family.

The sequence is that of Small ribosomal subunit protein eS6 from Halorubrum lacusprofundi (strain ATCC 49239 / DSM 5036 / JCM 8891 / ACAM 34).